A 420-amino-acid chain; its full sequence is Xyloglucan O-acetyltransferase 4 (420 aa).

Residues 1-30 (MTMHEKMKLPSCSCSAFKCGKKDRWLNMER) lie on the Cytoplasmic side of the membrane. Residues 31-51 (PIPFLLIGLTTILSVFILYTL) form a helical; Signal-anchor for type II membrane protein membrane-spanning segment. Residues 52-420 (NPLKFVIEHN…LLLAVLRRLD (369 aa)) are Lumenal-facing. 4 disulfides stabilise this stretch: cysteine 78-cysteine 128, cysteine 99-cysteine 164, cysteine 108-cysteine 400, and cysteine 323-cysteine 396. Asparagine 96 carries N-linked (GlcNAc...) asparagine glycosylation. The GDS motif signature appears at 151–153 (GDS). Serine 153 (nucleophile) is an active-site residue. 4 N-linked (GlcNAc...) asparagine glycosylation sites follow: asparagine 192, asparagine 212, asparagine 270, and asparagine 324. Residue aspartate 395 is the Proton donor of the active site. A DXXH motif motif is present at residues 395–398 (DCVH). Histidine 398 (proton acceptor) is an active-site residue.

Belongs to the PC-esterase family. TBL subfamily.

It localises to the golgi apparatus membrane. Xyloglucan acetyltransferase that catalyzes the acetylation of fucosylated Gal residues on xyloglucan side chains. Predominantly catalyze 6-O-monoacetylation of Gal residues in the Fuc-Gal-Xyl trisaccharide side chains of xyloglucan oligomers. In Populus trichocarpa (Western balsam poplar), this protein is Xyloglucan O-acetyltransferase 4.